A 147-amino-acid polypeptide reads, in one-letter code: Shadow of prion protein (147 aa).

The N-terminal stretch at 1–24 (MNWTTATCWALLLATAFLCDSCSA) is a signal peptide. Over residues 26–43 (GGRGGARGSARGVRGGAR) the composition is skewed to gly residues. The disordered stretch occupies residues 26–46 (GGRGGARGSARGVRGGARGAS). Asn-107 carries an N-linked (GlcNAc...) asparagine glycan. Gly-122 carries GPI-anchor amidated glycine lipidation. Residues 123-147 (SGSVHSPRICLLLSGTLGALELLRP) constitute a propeptide, removed in mature form.

It belongs to the SPRN family. In terms of processing, N-glycosylated. In terms of tissue distribution, almost exclusively expressed in brain, with weak expression in lung and stomach.

Its subcellular location is the cell membrane. Prion-like protein that has PrP(C)-like neuroprotective activity. May act as a modulator for the biological actions of normal and abnormal PrP. The sequence is that of Shadow of prion protein (Sprn) from Rattus norvegicus (Rat).